The chain runs to 299 residues: tRNA dimethylallyltransferase (299 aa).

5-12 (GPTASGKT) is an ATP binding site. Substrate is bound at residue 7 to 12 (TASGKT). Interaction with substrate tRNA regions lie at residues 30-33 (DSAL), 154-158 (QRLSR), and 235-240 (RCVGYR).

It belongs to the IPP transferase family. Monomer. Mg(2+) serves as cofactor.

The catalysed reaction is adenosine(37) in tRNA + dimethylallyl diphosphate = N(6)-dimethylallyladenosine(37) in tRNA + diphosphate. Catalyzes the transfer of a dimethylallyl group onto the adenine at position 37 in tRNAs that read codons beginning with uridine, leading to the formation of N6-(dimethylallyl)adenosine (i(6)A). The sequence is that of tRNA dimethylallyltransferase from Shewanella denitrificans (strain OS217 / ATCC BAA-1090 / DSM 15013).